The following is a 347-amino-acid chain: Bifunctional methylenetetrahydrofolate dehydrogenase/cyclohydrolase 2, mitochondrial (347 aa).

Substrate-binding positions include 98–102 (YVRNK) and 145–147 (VQL). NAD(+) is bound by residues 214–216 (GRS) and Arg-247. Residue 323-327 (PGGVG) coordinates substrate.

Belongs to the tetrahydrofolate dehydrogenase/cyclohydrolase family. Mg(2+) serves as cofactor. As to expression, isoform 1, isoform 4 and isoform 5 are expressed in brain and placenta.

It is found in the mitochondrion inner membrane. The catalysed reaction is (6R)-5,10-methylene-5,6,7,8-tetrahydrofolate + NAD(+) = (6R)-5,10-methenyltetrahydrofolate + NADH. It catalyses the reaction (6R)-5,10-methenyltetrahydrofolate + H2O = (6R)-10-formyltetrahydrofolate + H(+). The enzyme catalyses (6R)-5,10-methylene-5,6,7,8-tetrahydrofolate + NADP(+) = (6R)-5,10-methenyltetrahydrofolate + NADPH. It participates in one-carbon metabolism; tetrahydrofolate interconversion. Its function is as follows. Bifunctional mitochondrial folate-interconverting enzyme that has both NAD/NADP-dependent methylenetetrahydrofolate dehydrogenase and methenyltetrahydrofolate cyclohydrolase activities. In Homo sapiens (Human), this protein is Bifunctional methylenetetrahydrofolate dehydrogenase/cyclohydrolase 2, mitochondrial.